The chain runs to 519 residues: uncharacterized protein (519 aa).

A run of 13 helical transmembrane segments spans residues 19 to 39 (FSSSVWSIVPALLAIILAIAT), 42 to 62 (VLVSLSAGIIIGSLMLSDWQI), 87 to 107 (MNIVLFLLLLGVLTALLTVSG), 128 to 148 (LLAASLVFVTFIDDYFHSLAV), 179 to 199 (VMMPVSSWGAYIITLIGGLLA), 220 to 240 (FYAIFSIIMVFFVAYFSFDIA), 270 to 290 (LILPILVLIIATVSMMIYTGA), 311 to 331 (VGTSLVVGGFCSIIISTLLII), 345 to 365 (WIVGIKSMSGAIAILFFAWTI), 386 to 406 (IPMQFLPVILFVLGAAMAFST), 413 to 433 (FGIMLPIAAAMAANAAPELLL), 475 to 495 (LPYAATVATATSIGYIVVGFT), and 496 to 516 (YSGLAGFAATAVSLIVIIFAV).

The protein resides in the cell membrane. This is an uncharacterized protein from Haemophilus influenzae (strain ATCC 51907 / DSM 11121 / KW20 / Rd).